The following is a 159-amino-acid chain: Small ribosomal subunit protein uS7 (159 aa).

It belongs to the universal ribosomal protein uS7 family. Part of the 30S ribosomal subunit. Contacts proteins S9 and S11.

Functionally, one of the primary rRNA binding proteins, it binds directly to 16S rRNA where it nucleates assembly of the head domain of the 30S subunit. Is located at the subunit interface close to the decoding center, probably blocks exit of the E-site tRNA. The polypeptide is Small ribosomal subunit protein uS7 (Elusimicrobium minutum (strain Pei191)).